The chain runs to 479 residues: Integrin-linked protein kinase 1 (479 aa).

Phosphoserine is present on residues S17 and S26. Residues 29–73 (FTRQSSLDPRRTNMRFSFGRQSSLDPIRRSPDSSKSDDEPHMSVP) are disordered. Over residues 54–69 (PIRRSPDSSKSDDEPH) the composition is skewed to basic and acidic residues. ANK repeat units lie at residues 77 to 106 (DSTM…DVNS) and 110 to 139 (DGRT…NIDA). The Protein kinase domain occupies 194–461 (LEVQVRKSDG…EIIIRLDKIV (268 aa)). Residues 200–208 (KSDGISKGA) and K222 contribute to the ATP site. D319 functions as the Proton acceptor in the catalytic mechanism.

This sequence belongs to the protein kinase superfamily. Ser/Thr protein kinase family. Interacts with CML9 and POT5/HAK5. In terms of processing, autophosphorylated at Ser-17 and Ser-26.

It is found in the cell membrane. The protein localises to the endoplasmic reticulum membrane. The enzyme catalyses L-seryl-[protein] + ATP = O-phospho-L-seryl-[protein] + ADP + H(+). It catalyses the reaction L-threonyl-[protein] + ATP = O-phospho-L-threonyl-[protein] + ADP + H(+). Its activity is regulated as follows. Kinase activity is suppressed by interaction with CML9. Its function is as follows. Functions as a link between plant defense pathways, stress responses and potassium homeostasis. Promotes osmotic stress sensitivity, responses to the bacterial-derived pathogen-associated molecular pattern (PAMP) flg22, and resistance to bacterial pathogens. Promotes the accumulation of POT5/HAK5, a potassium transporter that mediates high-affinity uptake during potassium deficiency. In Arabidopsis thaliana (Mouse-ear cress), this protein is Integrin-linked protein kinase 1.